The chain runs to 152 residues: UPF0266 membrane protein YobD (152 aa).

The Periplasmic portion of the chain corresponds to 1 to 5; sequence MTITD. Residues 6–26 traverse the membrane as a helical segment; that stretch reads LVLILFIAALLAYALYDQFIM. The Cytoplasmic portion of the chain corresponds to 27–44; sequence PRRNGPTLLSIALLRRGR. The helical transmembrane segment at 45–65 threads the bilayer; the sequence is IDSVIFVGLVAILIYNNVTSH. Position 66 (Gly66) is a topological domain, periplasmic. A helical transmembrane segment spans residues 67–87; sequence AQMTTWLLSALALMGFYIFWI. Residues 88 to 152 are Cytoplasmic-facing; it reads RTPRIIFKQR…KIYKLLIENQ (65 aa).

The protein belongs to the UPF0266 family.

It is found in the cell inner membrane. The sequence is that of UPF0266 membrane protein YobD (yobD) from Salmonella typhi.